The primary structure comprises 94 residues: Antitoxin HipB (94 aa).

Positions 23 to 77 (MKLVRQQNGWTQSELAKKIGIKQATISNFENNPDNTSLTTFFKILQSLELSMTLC) constitute an HTH cro/C1-type domain. The H-T-H motif DNA-binding region spans 34-53 (QSELAKKIGIKQATISNFEN).

As to quaternary structure, homodimer. Forms a HipA(2)HipB(2) heterotetramer which can interact with DNA. This complex also blocks the toxic activity of HipA.

Its function is as follows. Antitoxin component of a type II type II toxin-antitoxin (TA) system. Neutralizes the toxic effect of cognate toxin HipA. Represses the hipBA operon promoter. The chain is Antitoxin HipB (hipB) from Escherichia coli O6:H1 (strain CFT073 / ATCC 700928 / UPEC).